The sequence spans 73 residues: Dermaseptin-1 (73 aa).

Residues 1–22 form the signal peptide; that stretch reads MAFLKKSIFLALFLGMVSLSIC. Residues 23 to 43 constitute a propeptide, removed in mature form; that stretch reads EEEKRENEGEEEQEDDEQSEM. The tract at residues 25 to 46 is disordered; sequence EKRENEGEEEQEDDEQSEMKRG. Acidic residues predominate over residues 30–40; it reads EGEEEQEDDEQ. Leucine 70 is modified (leucine amide). Positions 72–73 are cleaved as a propeptide — removed in mature form; that stretch reads EQ.

Expressed by the skin glands.

The protein resides in the secreted. In terms of biological role, has antiparasitic activity against trypomastigote form of T.cruzi (IC(50)=0.68 uM) in vitro but not against L.infantum. Probably acts by permeabilizing cell membranes. In vitro, shows no cytotoxicity against macrophages. Has antibacterial activity. This Pithecopus nordestinus (Northeastern Brazilian leaf frog) protein is Dermaseptin-1.